A 257-amino-acid polypeptide reads, in one-letter code: NAD-capped RNA hydrolase NudC (257 aa).

Residues Lys-25 and Arg-69 each coordinate substrate. The Zn(2+) site is built by Cys-98 and Cys-101. Glu-111 contributes to the substrate binding site. Cys-116 and Cys-119 together coordinate Zn(2+). Tyr-124 is a substrate binding site. One can recognise a Nudix hydrolase domain in the interval 125–248 (PQIAPCIIVA…TVARRLIEDT (124 aa)). Positions 158, 174, and 178 each coordinate a divalent metal cation. The short motif at 159–180 (GFVEVGETLEQAVAREVMEESG) is the Nudix box element. 192-199 (QPWPFPQS) is a substrate binding site. Residue Glu-219 participates in a divalent metal cation binding. Ala-241 lines the substrate pocket.

This sequence belongs to the Nudix hydrolase family. NudC subfamily. In terms of assembly, homodimer. Mg(2+) is required as a cofactor. Requires Mn(2+) as cofactor. The cofactor is Zn(2+).

It catalyses the reaction a 5'-end NAD(+)-phospho-ribonucleoside in mRNA + H2O = a 5'-end phospho-adenosine-phospho-ribonucleoside in mRNA + beta-nicotinamide D-ribonucleotide + 2 H(+). The catalysed reaction is NAD(+) + H2O = beta-nicotinamide D-ribonucleotide + AMP + 2 H(+). It carries out the reaction NADH + H2O = reduced beta-nicotinamide D-ribonucleotide + AMP + 2 H(+). MRNA decapping enzyme that specifically removes the nicotinamide adenine dinucleotide (NAD) cap from a subset of mRNAs by hydrolyzing the diphosphate linkage to produce nicotinamide mononucleotide (NMN) and 5' monophosphate mRNA. The NAD-cap is present at the 5'-end of some mRNAs and stabilizes RNA against 5'-processing. Has preference for mRNAs with a 5'-end purine. Catalyzes the hydrolysis of a broad range of dinucleotide pyrophosphates. In Shigella boydii serotype 18 (strain CDC 3083-94 / BS512), this protein is NAD-capped RNA hydrolase NudC.